The primary structure comprises 240 residues: Large ribosomal subunit protein uL2 (240 aa).

Residues 1–12 (MGRRIQGQRRGR) show a composition bias toward basic residues. Disordered regions lie at residues 1-21 (MGRR…RAPS) and 198-240 (VDHP…GSNK). The span at 221–231 (PPGRKVGDIAS) shows a compositional bias: basic and acidic residues.

It belongs to the universal ribosomal protein uL2 family. As to quaternary structure, part of the 50S ribosomal subunit. Forms a bridge to the 30S subunit in the 70S ribosome.

Its function is as follows. One of the primary rRNA binding proteins. Required for association of the 30S and 50S subunits to form the 70S ribosome, for tRNA binding and peptide bond formation. It has been suggested to have peptidyltransferase activity; this is somewhat controversial. Makes several contacts with the 16S rRNA in the 70S ribosome. This Halorubrum lacusprofundi (strain ATCC 49239 / DSM 5036 / JCM 8891 / ACAM 34) protein is Large ribosomal subunit protein uL2.